Here is a 356-residue protein sequence, read N- to C-terminus: MVLNMESTGEAVRSTTGNDGGITVVRSDAPSDFHVAQRSESSNQSPTSVTPPPPQPSSHHTAPPPLQISTVTTTTTTAAMEGISGGLMKKKRGRPRKYGPDGTVVALSPKPISSAPAPSHLPPPSSHVIDFSASEKRSKVKPTNSFNRTKYHHQVENLGEWAPCSVGGNFTPHIITVNTGEDVTMKIISFSQQGPRSICVLSANGVISSVTLRQPDSSGGTLTYEGRFEILSLSGSFMPNDSGGTRSRTGGMSVSLASPDGRVVGGGLAGLLVAASPVQVVVGSFLAGTDHQDQKPKKNKHDFMLSSPTAAIPISSAADHRTIHSVSSLPVNNNTWQTSLASDPRNKHTDINVNVT.

The segment at 1–127 is disordered; it reads MVLNMESTGE…PSHLPPPSSH (127 aa). Residues 49–66 are compositionally biased toward pro residues; it reads VTPPPPQPSSHHTAPPPL. The segment covering 88–97 has biased composition (basic residues); it reads MKKKRGRPRK. Residues 89 to 97 carry the Bipartite nuclear localization signal motif; it reads KKKRGRPRK. The segment at residues 89-101 is a DNA-binding region (a.T hook); it reads KKKRGRPRKYGPD. The segment covering 106–118 has biased composition (low complexity); sequence ALSPKPISSAPAP. One can recognise a PPC domain in the interval 167–309; the sequence is GGNFTPHIIT…KHDFMLSSPT (143 aa). Residues 270 to 287 form a required for nuclear localization region; sequence GLLVAASPVQVVVGSFLA. Positions 295-302 match the Nuclear localization signal motif; it reads KPKKNKHD.

Its subcellular location is the nucleus. The protein resides in the nucleoplasm. It is found in the chromosome. Transcription factor that specifically binds AT-rich DNA sequences related to the nuclear matrix attachment regions (MARs). May play a function in the positioning of chromatin fibers within the nucleus. The sequence is that of AT-hook motif nuclear-localized protein 1 from Arabidopsis thaliana (Mouse-ear cress).